Consider the following 918-residue polypeptide: uncharacterized protein (918 aa).

Disordered stretches follow at residues alanine 66–glycine 150, glycine 226–phenylalanine 283, alanine 326–asparagine 481, alanine 515–leucine 548, glutamate 594–lysine 707, asparagine 737–threonine 774, and histidine 800–methionine 918. A compositionally biased stretch (low complexity) spans glutamine 79–serine 89. Residues asparagine 103 to serine 127 are compositionally biased toward basic and acidic residues. The segment covering serine 270–alanine 281 has biased composition (low complexity). Composition is skewed to polar residues over residues alanine 326–leucine 354, lysine 363–aspartate 372, and alanine 379–glutamate 404. Residues serine 430–serine 441 show a composition bias toward low complexity. A compositionally biased stretch (basic and acidic residues) spans alanine 515 to lysine 533. 2 stretches are compositionally biased toward polar residues: residues glycine 534 to glycine 545 and valine 604 to serine 619. Positions serine 632–aspartate 647 are enriched in low complexity. Residues valine 648–glutamate 660 show a composition bias toward basic and acidic residues. Over residues serine 661–serine 672 the composition is skewed to polar residues. Over residues glutamate 673–asparagine 688 the composition is skewed to basic and acidic residues. A compositionally biased stretch (polar residues) spans alanine 689 to lysine 702. Composition is skewed to basic and acidic residues over residues histidine 738–histidine 765, histidine 800–histidine 814, glutamate 830–glutamine 846, and leucine 883–methionine 918.

This is an uncharacterized protein from Caenorhabditis elegans.